We begin with the raw amino-acid sequence, 325 residues long: Electron transfer flavoprotein subunit alpha (325 aa).

Position 262–290 (262–290 (LYIACGISGAIQHLAGMSNSKVIVAINKD)) interacts with FAD.

It belongs to the ETF alpha-subunit/FixB family. In terms of assembly, heterodimer of an alpha and a beta subunit. The cofactor is FAD.

In terms of biological role, the electron transfer flavoprotein serves as a specific electron acceptor for other dehydrogenases. It transfers the electrons to the main respiratory chain via ETF-ubiquinone oxidoreductase (ETF dehydrogenase). The sequence is that of Electron transfer flavoprotein subunit alpha (etfA) from Bacillus subtilis (strain 168).